A 674-amino-acid polypeptide reads, in one-letter code: Xaa-Pro aminopeptidase 2 (674 aa).

The first 22 residues, 1-22 (MAQAYWQCYPWLVLLCACAWSY), serve as a signal peptide directing secretion. The N-linked (GlcNAc...) asparagine glycan is linked to N65. Residue R116 coordinates substrate. N270, N278, and N293 each carry an N-linked (GlcNAc...) asparagine glycan. H430 is a binding site for substrate. Residues D450, D461, and H524 each coordinate Zn(2+). Substrate-binding residues include H524, H533, and E555. The Zn(2+) site is built by E555 and E569. The GPI-anchor amidated alanine moiety is linked to residue A650. Residues 651–674 (RAPHIISWTSLWVASALAILSWSS) constitute a propeptide, removed in mature form.

It belongs to the peptidase M24B family. Homotrimer. It depends on Zn(2+) as a cofactor. N-glycosylated. Strongly expressed in small intestine, heart and lung. Also detected in testis, skeletal muscle, spleen, liver, kidney, brain, uterus, eye, lymph node, thymus, stomach, prostate and bone marrow.

The protein localises to the cell membrane. The catalysed reaction is Release of any N-terminal amino acid, including proline, that is linked to proline, even from a dipeptide or tripeptide.. In terms of biological role, membrane-bound metalloprotease which catalyzes the removal of a penultimate prolyl residue from the N-termini of peptides, such as Arg-Pro-Pro. May play a role in the metabolism of the vasodilator bradykinin. This chain is Xaa-Pro aminopeptidase 2, found in Mus musculus (Mouse).